The primary structure comprises 91 residues: Small ribosomal subunit protein uS15 (91 aa).

It belongs to the universal ribosomal protein uS15 family. In terms of assembly, part of the 30S ribosomal subunit. Forms a bridge to the 50S subunit in the 70S ribosome, contacting the 23S rRNA.

In terms of biological role, one of the primary rRNA binding proteins, it binds directly to 16S rRNA where it helps nucleate assembly of the platform of the 30S subunit by binding and bridging several RNA helices of the 16S rRNA. Its function is as follows. Forms an intersubunit bridge (bridge B4) with the 23S rRNA of the 50S subunit in the ribosome. This Rickettsia felis (strain ATCC VR-1525 / URRWXCal2) (Rickettsia azadi) protein is Small ribosomal subunit protein uS15.